A 216-amino-acid polypeptide reads, in one-letter code: Protein GrpE (216 aa).

Disordered stretches follow at residues 1–45 and 185–216; these read MTEE…LDPT and RVAV…TEEV. Acidic residues predominate over residues 205–216; that stretch reads TDDEESGGTEEV.

It belongs to the GrpE family. As to quaternary structure, homodimer.

It localises to the cytoplasm. Functionally, participates actively in the response to hyperosmotic and heat shock by preventing the aggregation of stress-denatured proteins, in association with DnaK and GrpE. It is the nucleotide exchange factor for DnaK and may function as a thermosensor. Unfolded proteins bind initially to DnaJ; upon interaction with the DnaJ-bound protein, DnaK hydrolyzes its bound ATP, resulting in the formation of a stable complex. GrpE releases ADP from DnaK; ATP binding to DnaK triggers the release of the substrate protein, thus completing the reaction cycle. Several rounds of ATP-dependent interactions between DnaJ, DnaK and GrpE are required for fully efficient folding. The protein is Protein GrpE of Streptomyces griseus subsp. griseus (strain JCM 4626 / CBS 651.72 / NBRC 13350 / KCC S-0626 / ISP 5235).